Reading from the N-terminus, the 154-residue chain is Large ribosomal subunit protein uL13 (154 aa).

The protein belongs to the universal ribosomal protein uL13 family. In terms of assembly, part of the 50S ribosomal subunit.

Its function is as follows. This protein is one of the early assembly proteins of the 50S ribosomal subunit, although it is not seen to bind rRNA by itself. It is important during the early stages of 50S assembly. This chain is Large ribosomal subunit protein uL13, found in Bradyrhizobium diazoefficiens (strain JCM 10833 / BCRC 13528 / IAM 13628 / NBRC 14792 / USDA 110).